The primary structure comprises 103 residues: Co-chaperonin GroES (103 aa).

It belongs to the GroES chaperonin family. As to quaternary structure, heptamer of 7 subunits arranged in a ring. Interacts with the chaperonin GroEL.

The protein localises to the cytoplasm. In terms of biological role, together with the chaperonin GroEL, plays an essential role in assisting protein folding. The GroEL-GroES system forms a nano-cage that allows encapsulation of the non-native substrate proteins and provides a physical environment optimized to promote and accelerate protein folding. GroES binds to the apical surface of the GroEL ring, thereby capping the opening of the GroEL channel. The sequence is that of Co-chaperonin GroES from Synechococcus elongatus (strain ATCC 33912 / PCC 7942 / FACHB-805) (Anacystis nidulans R2).